Reading from the N-terminus, the 126-residue chain is Holo-[acyl-carrier-protein] synthase (126 aa).

Mg(2+) is bound by residues Asp-9 and Glu-58.

It belongs to the P-Pant transferase superfamily. AcpS family. Requires Mg(2+) as cofactor.

The protein localises to the cytoplasm. It carries out the reaction apo-[ACP] + CoA = holo-[ACP] + adenosine 3',5'-bisphosphate + H(+). Transfers the 4'-phosphopantetheine moiety from coenzyme A to a Ser of acyl-carrier-protein. The protein is Holo-[acyl-carrier-protein] synthase of Sodalis glossinidius (strain morsitans).